Here is a 165-residue protein sequence, read N- to C-terminus: Protein OPG091 (165 aa).

Belongs to the orthopoxvirus OPG091 family.

The protein resides in the virion. Its subcellular location is the host cytoplasm. Contributes to vaccinia virus virulence in mice but not to replication in cell culture. The sequence is that of Protein OPG091 (OPG091) from Vaccinia virus (strain Western Reserve) (VACV).